Here is a 746-residue protein sequence, read N- to C-terminus: NAD(P)H-quinone oxidoreductase subunit 5, chloroplastic (746 aa).

16 helical membrane passes run 9-29, 40-60, 89-109, 125-145, 147-167, 185-205, 221-241, 258-278, 280-300, 327-347, 354-374, 396-416, 425-445, 547-567, 608-628, and 723-743; these read WIIP…LLLF, WTFL…YLSI, IDPL…LVLI, FAYM…SNLI, VYFF…FWFT, GDFG…SFEF, VNLL…IAKS, TPIS…FLVA, LLPL…IGII, LGYM…FHLI, ALLF…VGYS, IAFL…CFWS, LLFS…TAFY, ILFP…IGIP, FSVS…KPFY, and YLFL…FFYF.

It belongs to the complex I subunit 5 family. NDH is composed of at least 16 different subunits, 5 of which are encoded in the nucleus.

The protein resides in the plastid. The protein localises to the chloroplast thylakoid membrane. It catalyses the reaction a plastoquinone + NADH + (n+1) H(+)(in) = a plastoquinol + NAD(+) + n H(+)(out). The catalysed reaction is a plastoquinone + NADPH + (n+1) H(+)(in) = a plastoquinol + NADP(+) + n H(+)(out). Functionally, NDH shuttles electrons from NAD(P)H:plastoquinone, via FMN and iron-sulfur (Fe-S) centers, to quinones in the photosynthetic chain and possibly in a chloroplast respiratory chain. The immediate electron acceptor for the enzyme in this species is believed to be plastoquinone. Couples the redox reaction to proton translocation, and thus conserves the redox energy in a proton gradient. The polypeptide is NAD(P)H-quinone oxidoreductase subunit 5, chloroplastic (ndhF) (Nasturtium officinale (Watercress)).